Consider the following 315-residue polypeptide: Eukaryotic translation initiation factor 2 subunit 1 (315 aa).

Positions 17 to 88 constitute an S1 motif domain; it reads EDVVMVNVRS…EKGYIDLSKR (72 aa). At serine 49 the chain carries Phosphoserine; by HRI. Residue serine 52 is modified to Phosphoserine. N6-acetyllysine is present on lysine 141. Position 158 is a phosphoserine (serine 158). Residues threonine 279 and threonine 281 each carry the phosphothreonine modification. Residues 293–315 are disordered; that stretch reads LERENAEVDGDDDAEEMEAKAED. A compositionally biased stretch (acidic residues) spans 299–308; it reads EVDGDDDAEE.

Belongs to the eIF-2-alpha family. Eukaryotic translation initiation factor 2 eIF2 is a heterotrimeric complex composed of an alpha (EIF2S1), a beta (EIF2S2) and a gamma (EIF2S3) chain. eIF2 is member of the 43S pre-initiation complex (43S PIC). eIF2 forms a complex with at least CELF1/CUGBP1, CALR, CALR3, EIF2S1, EIF2S2, HSP90B1 and HSPA5. Interaction with METAP2 protects EIF2S1 from inhibitory phosphorylation. Interacts with ABCF1 isoform 2. Associates with ribosomes. Interacts with DDX3X in an RNA-independent manner. Interacts with CDC123. In terms of assembly, (Microbial infection) Interacts with rotavirus A non-structural protein 2; this interaction probably plays a role in the sequestration of IF2A in viral factories. Interacts with rotavirus A non-structural protein 5; this interaction probably plays a role in its sequestration in viral factories. Phosphorylation at Ser-49 and Ser-52 stabilizes the eIF-2/GDP/eIF2B complex and prevents GDP/GTP exchange reaction, thus impairing the recycling of eIF-2 between successive rounds of initiation and leading to global inhibition of translation, while concomitantly initiating the preferential translation of integrated stress response (ISR)-specific mRNAs. Substrate for at least 4 kinases: EIF2AK1/HRI, EIF2AK2/PKR, EIF2AK3/PERK and EIF2AK4/GCN2. Phosphorylation on Ser-52 by the EIF2AK4/GCN2 protein kinase occurs in response to amino acid starvation and UV irradiation. Phosphorylation at Ser-52 by the EIF2AK3/PERK protein kinase occurs in response to the unfolded protein response. Phosphorylation at Ser-52 by EIF2AK1/HRI in response to mitochondrial damage promotes relocalization to the mitochondrial surface. Post-translationally, (Microbial infection) Phosphorylation by vaccinia virus protein E3 and rotavirus A stabilizes the eIF-2/GDP/eIF2B complex and prevents GDP/GTP exchange reaction, thus impairing the recycling of eIF-2 between successive rounds of initiation and leading to global inhibition of translation.

It is found in the cytoplasm. It localises to the stress granule. The protein localises to the cytosol. Its subcellular location is the mitochondrion. Activity is regulated by phosphorylation at Ser-49 and Ser-52, which stabilizes the eIF2/GDP/eIF2B complex and prevents the eIF2B-mediated exchange of GDP for GTP, thereby preventing the formation of the 43S pre-initiation complex (43S PIC). This results in the global attenuation of 5' cap-dependent protein synthesis and concomitant translation of ISR-specific mRNAs that contain a short upstream open reading frame (uORF) in their 5' UTR, such as ATF4, ATF5, DDIT3/CHOP and PPP1R15A/GADD34. In terms of biological role, member of the eIF2 complex that functions in the early steps of protein synthesis by forming a ternary complex with GTP and initiator tRNA. This complex binds to a 40S ribosomal subunit, followed by mRNA binding to form a 43S pre-initiation complex (43S PIC). Junction of the 60S ribosomal subunit to form the 80S initiation complex is preceded by hydrolysis of the GTP bound to eIF2 and release of an eIF2-GDP binary complex. In order for eIF2 to recycle and catalyze another round of initiation, the GDP bound to eIF2 must exchange with GTP by way of a reaction catalyzed by eIF2B. EIF2S1/eIF2-alpha is a key component of the integrated stress response (ISR), required for adaptation to various stress: phosphorylation by metabolic-stress sensing protein kinases (EIF2AK1/HRI, EIF2AK2/PKR, EIF2AK3/PERK and EIF2AK4/GCN2) in response to stress converts EIF2S1/eIF2-alpha in a global protein synthesis inhibitor, leading to an attenuation of cap-dependent translation, while concomitantly initiating the preferential translation of ISR-specific mRNAs, such as the transcriptional activators ATF4 and QRICH1, and hence allowing ATF4- and QRICH1-mediated reprogramming. EIF2S1/eIF2-alpha also acts as an activator of mitophagy in response to mitochondrial damage: phosphorylation by EIF2AK1/HRI promotes relocalization to the mitochondrial surface, thereby triggering PRKN-independent mitophagy. The protein is Eukaryotic translation initiation factor 2 subunit 1 of Homo sapiens (Human).